The following is a 184-amino-acid chain: Major fimbrial subunit (184 aa).

The signal sequence occupies residues 1–22; sequence MKLSKIALAAALVFGINSVATA. Cysteines 49 and 88 form a disulfide.

This sequence belongs to the fimbrial protein family.

It is found in the fimbrium. Functionally, major structural component of PMF fimbriae. This Proteus mirabilis (strain HI4320) protein is Major fimbrial subunit (pmfA).